Reading from the N-terminus, the 545-residue chain is Chaperonin GroEL 2 (545 aa).

Residues 29-32 (TLGP), 86-90 (DGTTT), Gly-413, 477-479 (DAA), and Asp-493 contribute to the ATP site. A disordered region spans residues 526–545 (PEPAAAGHGHGHGHQHGPGF). A compositionally biased stretch (basic residues) spans 534-545 (GHGHGHQHGPGF).

Belongs to the chaperonin (HSP60) family. In terms of assembly, forms a cylinder of 14 subunits composed of two heptameric rings stacked back-to-back. Interacts with the co-chaperonin GroES.

It is found in the cytoplasm. The catalysed reaction is ATP + H2O + a folded polypeptide = ADP + phosphate + an unfolded polypeptide.. Its function is as follows. Together with its co-chaperonin GroES, plays an essential role in assisting protein folding. The GroEL-GroES system forms a nano-cage that allows encapsulation of the non-native substrate proteins and provides a physical environment optimized to promote and accelerate protein folding. This is Chaperonin GroEL 2 from Salinispora arenicola (strain CNS-205).